We begin with the raw amino-acid sequence, 893 residues long: UPF0182 protein CLB_0018 (893 aa).

7 consecutive transmembrane segments (helical) span residues 9 to 29 (IPLF…NFII), 49 to 69 (AIII…WMYY), 94 to 114 (LFFI…SSSY), 154 to 174 (VIIS…FILE), 202 to 222 (LAIV…IKIW), 246 to 266 (FYKI…LSIV), and 273 to 293 (VSIC…ASFL).

Belongs to the UPF0182 family.

It is found in the cell membrane. The protein is UPF0182 protein CLB_0018 of Clostridium botulinum (strain ATCC 19397 / Type A).